Reading from the N-terminus, the 388-residue chain is Glucose-1-phosphate adenylyltransferase (388 aa).

Residues Y100, G165, 180–181 (EK), and S191 contribute to the alpha-D-glucose 1-phosphate site.

Belongs to the bacterial/plant glucose-1-phosphate adenylyltransferase family. In terms of assembly, homotetramer.

It catalyses the reaction alpha-D-glucose 1-phosphate + ATP + H(+) = ADP-alpha-D-glucose + diphosphate. It participates in glycan biosynthesis; glycogen biosynthesis. Its function is as follows. Involved in the biosynthesis of ADP-glucose, a building block required for the elongation reactions to produce glycogen. Catalyzes the reaction between ATP and alpha-D-glucose 1-phosphate (G1P) to produce pyrophosphate and ADP-Glc. This chain is Glucose-1-phosphate adenylyltransferase, found in Clostridium perfringens (strain SM101 / Type A).